Consider the following 457-residue polypeptide: Argininosuccinate lyase (457 aa).

The protein belongs to the lyase 1 family. Argininosuccinate lyase subfamily.

The protein localises to the cytoplasm. The catalysed reaction is 2-(N(omega)-L-arginino)succinate = fumarate + L-arginine. Its pathway is amino-acid biosynthesis; L-arginine biosynthesis; L-arginine from L-ornithine and carbamoyl phosphate: step 3/3. This chain is Argininosuccinate lyase, found in Haemophilus influenzae (strain PittGG).